Here is a 255-residue protein sequence, read N- to C-terminus: Phosphatidylcholine synthase (255 aa).

Over methionine 1 to tyrosine 13 the chain is Cytoplasmic. The chain crosses the membrane as a helical span at residues phenylalanine 14–leucine 34. Residues tyrosine 35 to tyrosine 42 are Periplasmic-facing. The helical transmembrane segment at valine 43–alanine 63 threads the bilayer. Residues arginine 64–aspartate 76 are Cytoplasmic-facing. A helical transmembrane segment spans residues glycine 77–leucine 97. The Periplasmic segment spans residues leucine 98–methionine 103. Residues leucine 104–phenylalanine 124 form a helical membrane-spanning segment. The Cytoplasmic segment spans residues cysteine 125–aspartate 133. The chain crosses the membrane as a helical span at residues histidine 134–asparagine 154. Residue threonine 155 is a topological domain, periplasmic. The helical transmembrane segment at serine 156–valine 175 threads the bilayer. Residues lysine 176–arginine 190 are Cytoplasmic-facing. The chain crosses the membrane as a helical span at residues valine 191 to leucine 211. Residues valine 212–threonine 217 are Periplasmic-facing. Residues asparagine 218 to tyrosine 238 form a helical membrane-spanning segment. Residues arginine 239–aspartate 255 are Cytoplasmic-facing.

Belongs to the CDP-alcohol phosphatidyltransferase class-I family. Mn(2+) is required as a cofactor.

It localises to the cell inner membrane. The catalysed reaction is a CDP-1,2-diacyl-sn-glycerol + choline = a 1,2-diacyl-sn-glycero-3-phosphocholine + CMP + H(+). Its function is as follows. Condenses choline with CDP-diglyceride to produce phosphatidylcholine and CMP. Affects virulence of this bacterium when there is a complete loss of phosphatidylcholine formation due to absence of both the synthase (pcs) and the methylation (pmtA) pathways. Reduced virulence results from lowered yields of bacteria within host macrophages and because of loss of high multiplicity cytotoxicity. This is Phosphatidylcholine synthase from Legionella pneumophila subsp. pneumophila (strain Philadelphia 1 / ATCC 33152 / DSM 7513).